The chain runs to 184 residues: MGFLKILRKQRAREREMRILILGLDNAGKTTLMKKFLDEPTDTIEPTLGFDIKTVHFKDFQLNLWDVGGQKSLRSYWKNYFESTDALIWVVDSSDRERLLQCSEELKKLLGEERLAGASLLVLANKSDLPGAIDVNSIAQVLDLHSIKSHHWKIFSCCALSGDRLVQAMTWLCDDVGSRLFILD.

The N-myristoyl glycine moiety is linked to residue Gly2. Residues 23 to 30, 66 to 70, Gly68, and 125 to 128 each bind GTP; these read GLDNAGKT, DVGGQ, and NKSD.

The protein belongs to the small GTPase superfamily. Arf family. In terms of tissue distribution, in the embryo, strongly expressed in migrating hypodermal cells. Shortly before the beginning of elongation, expressed in many developing neurons where it persists throughout adulthood. In the larva, highly expressed in migrating hypodermal cells and the uterus. Also expressed in vulva, spermatheca, sheath cells, distal tips cells and proctoderm of the male tail.

It is found in the cytoplasm. The protein localises to the cell membrane. The protein resides in the cytoskeleton. It localises to the microtubule organizing center. Its subcellular location is the centrosome. In terms of biological role, GTP-binding protein that functions in embryogenesis, cytokinesis, germline development and microtubulule cytoskeleton dynamics. The chain is ADP-ribosylation factor-like protein 2 (evl-20) from Caenorhabditis elegans.